A 225-amino-acid polypeptide reads, in one-letter code: Urease accessory protein UreG 2 (225 aa).

GTP is bound at residue 31-38 (GPVGSGKT).

This sequence belongs to the SIMIBI class G3E GTPase family. UreG subfamily. As to quaternary structure, homodimer. UreD, UreF and UreG form a complex that acts as a GTP-hydrolysis-dependent molecular chaperone, activating the urease apoprotein by helping to assemble the nickel containing metallocenter of UreC. The UreE protein probably delivers the nickel.

Its subcellular location is the cytoplasm. Its function is as follows. Facilitates the functional incorporation of the urease nickel metallocenter. This process requires GTP hydrolysis, probably effectuated by UreG. The chain is Urease accessory protein UreG 2 from Streptomyces griseus subsp. griseus (strain JCM 4626 / CBS 651.72 / NBRC 13350 / KCC S-0626 / ISP 5235).